We begin with the raw amino-acid sequence, 213 residues long: Sclerostin (213 aa).

A signal peptide spans 1 to 28; that stretch reads MQLSLAPCLACLLVHAAFVAVESQGWQA. An N-linked (GlcNAc...) asparagine glycan is attached at asparagine 53. Cystine bridges form between cysteine 80/cysteine 134, cysteine 94/cysteine 148, cysteine 105/cysteine 165, and cysteine 109/cysteine 167. Residues 82–172 form the CTCK domain; it reads ELHYTRFVTD…ASCKCKRLTR (91 aa). Residue asparagine 175 is glycosylated (N-linked (GlcNAc...) asparagine). The disordered stretch occupies residues 178-213; that stretch reads ELKDFGPETARPQKGRKPRPRARGAKANQAELENAY. Residues 190–201 show a composition bias toward basic residues; that stretch reads QKGRKPRPRARG.

This sequence belongs to the sclerostin family. In terms of assembly, interacts with LRP4 (via the extracellular domain); the interaction facilitates the inhibition of Wnt signaling. Interacts with LRP5 (via the first two YWTD-EGF repeat domains); the interaction inhibits Wnt-mediated signaling. Interacts with LRP6.

The protein resides in the secreted. Functionally, negative regulator of bone growth that acts through inhibition of Wnt signaling and bone formation. This chain is Sclerostin, found in Rattus norvegicus (Rat).